The sequence spans 394 residues: MAKAKFERNKPHVNVGTIGHVDHGKTTLTAAISHVLAKTYGGEAKDFSQIDNAPEERERGITINTSHIEYDTPTRHYAHVDCPGHADYVKNMITGAAQMDGAILVVASTDGPMPQTREHILLSRQVGVPFIIVFMNKCDMVDDAELLELVEMEVRELLSEYDFPGDDLPVIQGSALKALEGEPEWEAKIIELAAALDSYIPEPERDIDKPFLMPIEDVFSISGRGTVVTGRVERGIVRVGDEVEIVGIRATTKTTCTGVEMFRKLLDEGRAGENCGILLRGTKRDDVERGQVLSKPGSINPHTTFESEVYVLSKEEGGRHTPFFKGYRPQFYFRTTDVTGTIELPEGVEMVMPGDNIKMKVTLICPIAMDEGLRFAIREGGRTVGAGVVAKIFA.

One can recognise a tr-type G domain in the interval 10-204 (KPHVNVGTIG…ALDSYIPEPE (195 aa)). The interval 19-26 (GHVDHGKT) is G1. 19–26 (GHVDHGKT) lines the GTP pocket. Thr-26 is a binding site for Mg(2+). Positions 60-64 (GITIN) are G2. A G3 region spans residues 81 to 84 (DCPG). GTP-binding positions include 81–85 (DCPGH) and 136–139 (NKCD). The G4 stretch occupies residues 136–139 (NKCD). A G5 region spans residues 174–176 (SAL).

It belongs to the TRAFAC class translation factor GTPase superfamily. Classic translation factor GTPase family. EF-Tu/EF-1A subfamily. Monomer.

It localises to the cytoplasm. The catalysed reaction is GTP + H2O = GDP + phosphate + H(+). Functionally, GTP hydrolase that promotes the GTP-dependent binding of aminoacyl-tRNA to the A-site of ribosomes during protein biosynthesis. The protein is Elongation factor Tu of Shewanella sp. (strain ANA-3).